A 248-amino-acid chain; its full sequence is 4-hydroxy-tetrahydrodipicolinate reductase (248 aa).

NAD(+) contacts are provided by residues Asp32, 74 to 76, and 99 to 102; these read GTT and SANF. The Proton donor/acceptor role is filled by His134. His135 provides a ligand contact to (S)-2,3,4,5-tetrahydrodipicolinate. Catalysis depends on Lys138, which acts as the Proton donor. 144 to 145 lines the (S)-2,3,4,5-tetrahydrodipicolinate pocket; it reads GT.

The protein belongs to the DapB family.

It localises to the cytoplasm. It carries out the reaction (S)-2,3,4,5-tetrahydrodipicolinate + NAD(+) + H2O = (2S,4S)-4-hydroxy-2,3,4,5-tetrahydrodipicolinate + NADH + H(+). The catalysed reaction is (S)-2,3,4,5-tetrahydrodipicolinate + NADP(+) + H2O = (2S,4S)-4-hydroxy-2,3,4,5-tetrahydrodipicolinate + NADPH + H(+). Its pathway is amino-acid biosynthesis; L-lysine biosynthesis via DAP pathway; (S)-tetrahydrodipicolinate from L-aspartate: step 4/4. Functionally, catalyzes the conversion of 4-hydroxy-tetrahydrodipicolinate (HTPA) to tetrahydrodipicolinate. This Pelodictyon phaeoclathratiforme (strain DSM 5477 / BU-1) protein is 4-hydroxy-tetrahydrodipicolinate reductase.